Here is a 154-residue protein sequence, read N- to C-terminus: Large ribosomal subunit protein uL13 (154 aa).

It belongs to the universal ribosomal protein uL13 family. As to quaternary structure, part of the 50S ribosomal subunit.

In terms of biological role, this protein is one of the early assembly proteins of the 50S ribosomal subunit, although it is not seen to bind rRNA by itself. It is important during the early stages of 50S assembly. The protein is Large ribosomal subunit protein uL13 of Rhodopseudomonas palustris (strain BisB5).